Consider the following 219-residue polypeptide: tRNA (guanine-N(7)-)-methyltransferase (219 aa).

D47, E72, N99, and D125 together coordinate S-adenosyl-L-methionine. D125 is an active-site residue. Substrate is bound by residues K129 and D161.

It belongs to the class I-like SAM-binding methyltransferase superfamily. TrmB family.

The catalysed reaction is guanosine(46) in tRNA + S-adenosyl-L-methionine = N(7)-methylguanosine(46) in tRNA + S-adenosyl-L-homocysteine. It participates in tRNA modification; N(7)-methylguanine-tRNA biosynthesis. In terms of biological role, catalyzes the formation of N(7)-methylguanine at position 46 (m7G46) in tRNA. This chain is tRNA (guanine-N(7)-)-methyltransferase, found in Nostoc sp. (strain PCC 7120 / SAG 25.82 / UTEX 2576).